A 120-amino-acid polypeptide reads, in one-letter code: Large ribosomal subunit protein uL18 (120 aa).

The protein belongs to the universal ribosomal protein uL18 family. As to quaternary structure, part of the 50S ribosomal subunit; part of the 5S rRNA/L5/L18/L25 subcomplex. Contacts the 5S and 23S rRNAs.

Its function is as follows. This is one of the proteins that bind and probably mediate the attachment of the 5S RNA into the large ribosomal subunit, where it forms part of the central protuberance. The polypeptide is Large ribosomal subunit protein uL18 (Rhizobium rhizogenes (strain K84 / ATCC BAA-868) (Agrobacterium radiobacter)).